Reading from the N-terminus, the 187-residue chain is Large ribosomal subunit protein bL25 (187 aa).

It belongs to the bacterial ribosomal protein bL25 family. CTC subfamily. In terms of assembly, part of the 50S ribosomal subunit; part of the 5S rRNA/L5/L18/L25 subcomplex. Contacts the 5S rRNA. Binds to the 5S rRNA independently of L5 and L18.

Its function is as follows. This is one of the proteins that binds to the 5S RNA in the ribosome where it forms part of the central protuberance. This Tropheryma whipplei (strain TW08/27) (Whipple's bacillus) protein is Large ribosomal subunit protein bL25.